The primary structure comprises 460 residues: Xyloglucan 6-xylosyltransferase 1 (460 aa).

The Cytoplasmic portion of the chain corresponds to 1–20 (MIEKCIGAHRFRRLQRFMRQ). A helical; Signal-anchor for type II membrane protein transmembrane segment spans residues 21 to 40 (GKVTILCLVLTVIVLRGTIG). At 41–460 (AGKFGTPEKD…KAAKLSTTTT (420 aa)) the chain is on the lumenal side. Residues glycine 156 and 227–229 (DSD) contribute to the UDP-alpha-D-xylose site. Aspartate 227 and aspartate 229 together coordinate Mn(2+). Histidine 346 serves as a coordination point for substrate. UDP-alpha-D-xylose contacts are provided by histidine 377, glycine 380, and lysine 382. A Mn(2+)-binding site is contributed by histidine 377. Substrate is bound by residues lysine 382 and 389-390 (DY). Asparagine 431 is a glycosylation site (N-linked (GlcNAc...) asparagine).

It belongs to the glycosyltransferase 34 family. Forms homodimer. Interacts with XXT2. Mn(2+) is required as a cofactor.

It is found in the golgi apparatus membrane. The catalysed reaction is Transfers an alpha-D-xylosyl residue from UDP-D-xylose to a glucose residue in xyloglucan, forming an alpha-(1-&gt;6)-D-xylosyl-D-glucose linkage.. Its pathway is protein modification; protein glycosylation. Xylosyltransferase specific to UDP-D-xylose that accepts both cellopentaose and cellohexaose as substrates, with a better use of cellohexaose, to produce xyloglucan. Adds preferentially the first xylosyl residue to the fourth glucosyl residue from the reducing end of both acceptors. Transfer one xylose mainly to the second glucose residue from the non-reducing end. The acceptor should have a minimum of four glucose residues. In Arabidopsis thaliana (Mouse-ear cress), this protein is Xyloglucan 6-xylosyltransferase 1.